The chain runs to 252 residues: 5'-nucleotidase SurE (252 aa).

Residues Asp8, Asp9, Ser39, and Asn91 each coordinate a divalent metal cation.

It belongs to the SurE nucleotidase family. The cofactor is a divalent metal cation.

The protein resides in the cytoplasm. The catalysed reaction is a ribonucleoside 5'-phosphate + H2O = a ribonucleoside + phosphate. Its function is as follows. Nucleotidase that shows phosphatase activity on nucleoside 5'-monophosphates. The sequence is that of 5'-nucleotidase SurE from Gemmatimonas aurantiaca (strain DSM 14586 / JCM 11422 / NBRC 100505 / T-27).